We begin with the raw amino-acid sequence, 217 residues long: tRNA (guanine-N(7)-)-methyltransferase (217 aa).

S-adenosyl-L-methionine contacts are provided by glutamate 44, glutamate 69, aspartate 96, and aspartate 118. Residue aspartate 118 is part of the active site. Residue lysine 122 coordinates substrate. The interaction with RNA stretch occupies residues arginine 124–arginine 129. Substrate contacts are provided by residues aspartate 154 and threonine 191–glutamate 194.

The protein belongs to the class I-like SAM-binding methyltransferase superfamily. TrmB family.

It carries out the reaction guanosine(46) in tRNA + S-adenosyl-L-methionine = N(7)-methylguanosine(46) in tRNA + S-adenosyl-L-homocysteine. It participates in tRNA modification; N(7)-methylguanine-tRNA biosynthesis. Its function is as follows. Catalyzes the formation of N(7)-methylguanine at position 46 (m7G46) in tRNA. In Bacillus velezensis (strain DSM 23117 / BGSC 10A6 / LMG 26770 / FZB42) (Bacillus amyloliquefaciens subsp. plantarum), this protein is tRNA (guanine-N(7)-)-methyltransferase.